Here is a 447-residue protein sequence, read N- to C-terminus: ATP-dependent protease ATPase subunit HslU (447 aa).

Residues Ile-17, 59–64 (GVGKTE), Asp-256, Glu-321, and Arg-393 each bind ATP.

It belongs to the ClpX chaperone family. HslU subfamily. A double ring-shaped homohexamer of HslV is capped on each side by a ring-shaped HslU homohexamer. The assembly of the HslU/HslV complex is dependent on binding of ATP.

Its subcellular location is the cytoplasm. Its function is as follows. ATPase subunit of a proteasome-like degradation complex; this subunit has chaperone activity. The binding of ATP and its subsequent hydrolysis by HslU are essential for unfolding of protein substrates subsequently hydrolyzed by HslV. HslU recognizes the N-terminal part of its protein substrates and unfolds these before they are guided to HslV for hydrolysis. The protein is ATP-dependent protease ATPase subunit HslU of Pseudomonas putida (strain ATCC 47054 / DSM 6125 / CFBP 8728 / NCIMB 11950 / KT2440).